Reading from the N-terminus, the 541-residue chain is Chaperonin GroEL 1 (541 aa).

Residues 30–33 (TLGP), 87–91 (DGTTT), Gly414, 478–480 (NAA), and Asp494 contribute to the ATP site.

This sequence belongs to the chaperonin (HSP60) family. Forms a cylinder of 14 subunits composed of two heptameric rings stacked back-to-back. Interacts with the co-chaperonin GroES.

Its subcellular location is the cytoplasm. The catalysed reaction is ATP + H2O + a folded polypeptide = ADP + phosphate + an unfolded polypeptide.. Its function is as follows. Together with its co-chaperonin GroES, plays an essential role in assisting protein folding. The GroEL-GroES system forms a nano-cage that allows encapsulation of the non-native substrate proteins and provides a physical environment optimized to promote and accelerate protein folding. This is Chaperonin GroEL 1 from Thermobifida fusca (strain YX).